The chain runs to 1166 residues: Reverse gyrase (1166 aa).

Residues 1 to 40 form an RG N-terminal-type zinc finger; it reads MINVMYKNSCPNCGGDISADRLLNGLPCETCLPYINGIDG. Residues Cys-10, Cys-13, Cys-28, and Cys-31 each coordinate Zn(2+). Residues Gln-92 and 109-116 contribute to the ATP site; that span reads APTGLGKT. The Helicase ATP-binding domain occupies 96–285; that stretch reads LRRLVSNQSF…ALRLLTGFEP (190 aa). A DEAD box motif is present at residues 190–193; sequence DDAD. The interval 576-1166 is topoisomerase I; sequence FNISTGLLIV…VNPLKSEQNV (591 aa). The Toprim domain maps to 580–743; it reads TGLLIVESPT…NIYRITYHEI (164 aa). Residue Glu-586 coordinates Mg(2+). The RG C-terminal-type zinc-finger motif lies at 662-689; the sequence is IKKCLDCNKTFSIASDKCPYCGSTNVQT. Zn(2+) contacts are provided by Cys-665, Cys-668, Cys-679, and Cys-682. Asp-712 lines the Mg(2+) pocket. The Topo IA-type catalytic domain occupies 759–1157; sequence NTNLVMSQIV…EIFSEISTLV (399 aa). The active-site O-(5'-phospho-DNA)-tyrosine intermediate is the Tyr-903.

In the N-terminal section; belongs to the DEAD box helicase family. DDVD subfamily. The protein in the C-terminal section; belongs to the type IA topoisomerase family. Monomer. Zn(2+) serves as cofactor. Requires Mg(2+) as cofactor.

It is found in the cytoplasm. The catalysed reaction is ATP + H2O = ADP + phosphate + H(+). Its activity is regulated as follows. Inhibited by UV light-induced lesions; substrate is completely cleaved but a nicked form accumulates, suggesting the reaction is blocked between the cleavage and ligation steps. Inhibited by actinomycin D; substrate DNA remains negatively supercoiled in this case. Activity is stimulated by SSB from S.solfataricus strain P2. Positive supercoiling is inhibited by Sul7d (also called Sso7d) from S.solfataricus strain MT4; SSB from S.solfataricus strain P2 relieves this inhibition. Functionally, modifies the topological state of DNA by introducing positive supercoils in an ATP-dependent process. Increases the linking number in steps of +1. In vitro requires high concentrations to supercoil negatively supercoiled DNA, relaxes plasmid DNA first; DNA single-strand binding protein (SSB) from S.solfataricus strain P2 stimulates positive supercoiling. SSB stimulates DNA-binding by reverse gyrase, and thus all subsequent steps. Binds to single-stranded DNA, transiently cleaves and then rejoins the ends, introducing a positive supercoil in the process. The scissile phosphodiester is attacked by the catalytic tyrosine of the enzyme, resulting in the formation of a DNA-(5'-phosphotyrosyl)-enzyme intermediate. May be involved in DNA damage response. Probably involved in rewinding DNA strands in regions of the chromosome that have opened up to allow replication, transcription, DNA repair and/or for DNA protection. This is Reverse gyrase from Saccharolobus shibatae (strain ATCC 51178 / DSM 5389 / JCM 8931 / NBRC 15437 / B12) (Sulfolobus shibatae).